Consider the following 132-residue polypeptide: Histone H2A (132 aa).

The segment covering 1–13 (MSAKGKTGRKKAS) has biased composition (basic residues). The tract at residues 1-21 (MSAKGKTGRKKASKGTSNSAK) is disordered.

Belongs to the histone H2A family. As to quaternary structure, the nucleosome is a histone octamer containing two molecules each of H2A, H2B, H3 and H4 assembled in one H3-H4 heterotetramer and two H2A-H2B heterodimers. The octamer wraps approximately 147 bp of DNA.

The protein localises to the nucleus. It is found in the chromosome. Its function is as follows. Core component of nucleosome. Nucleosomes wrap and compact DNA into chromatin, limiting DNA accessibility to the cellular machineries which require DNA as a template. Histones thereby play a central role in transcription regulation, DNA repair, DNA replication and chromosomal stability. DNA accessibility is regulated via a complex set of post-translational modifications of histones, also called histone code, and nucleosome remodeling. This Plasmodium falciparum protein is Histone H2A.